Consider the following 320-residue polypeptide: Olfactory receptor 5C1 (320 aa).

At 1–29 (MNSENLTRAAVAPAEFVLLGITNRWDLRV) the chain is on the extracellular side. N-linked (GlcNAc...) asparagine glycosylation is present at Asn-5. The helical transmembrane segment at 30-50 (ALFLTCLPVYLVSLLGNMGMA) threads the bilayer. Topologically, residues 51–58 (LLIRMDAR) are cytoplasmic. The helical transmembrane segment at 59-79 (LHTPMYFFLANLSLLDACYSS) threads the bilayer. Residues 80 to 103 (AIGPKMLVDLLLPRATIPYTACAL) lie on the Extracellular side of the membrane. The cysteines at positions 101 and 193 are disulfide-linked. A helical membrane pass occupies residues 104-124 (QMFVFAGLADTECCLLAAMAY). Over 125 to 143 (DRYVAIRNPLLYTTAMSQR) the chain is Cytoplasmic. Residues 144 to 164 (LCLALLGASGLGGAVSAFVHT) form a helical membrane-spanning segment. Over 165 to 200 (TLTFRLSFCRSRKINSFFCDIPPLLAISCSDTSLNE) the chain is Extracellular. The helical transmembrane segment at 201-221 (LLLFAICGFIQTATVLAITVS) threads the bilayer. Topologically, residues 222–241 (YGFIAGAVIHMRSVEGSRRA) are cytoplasmic. A helical transmembrane segment spans residues 242–262 (ASTGGSHLTAVAMMYGTLIFM). Residues 263–275 (YLRPSSSYALDTD) are Extracellular-facing. The chain crosses the membrane as a helical span at residues 276–296 (KMASVFYTLVIPSLNPLIYSL). The Cytoplasmic portion of the chain corresponds to 297–320 (RNKEVKEALRQTWSRFHCPGQGSQ).

This sequence belongs to the G-protein coupled receptor 1 family.

The protein resides in the cell membrane. In terms of biological role, odorant receptor. The sequence is that of Olfactory receptor 5C1 (OR5C1) from Homo sapiens (Human).